The sequence spans 322 residues: MKIKITAEEGQYNAHDAYMHFERQKWAELRDNVELTLSEDDLRQLQGINESLSIQEVIDIYLPLSRLLNLYVKTQQRRHTVRDKFLNSKNENVPYIIGIAGSVAVGKSTTARILQAILSHWPEHPRVALVTTDGFLRPNRELVARNIMHKKGFPESFDTKALIDFVAAIKSGKELISAPIYSHLTYDILPDKKLHLEKPDIVILEGLNVLQSASNYPDHPQRTFVSDFVDFSIFVDAETQLLKKWYVQRFLKFRKGAFTDPKAYFHSYSQMEETQAIDISEKIWDEINGVNLEENIRPTRDRANLILTKATDHQVDSVHLRK.

101–108 (GSVAVGKS) is a binding site for ATP.

It belongs to the prokaryotic pantothenate kinase family.

Its subcellular location is the cytoplasm. The catalysed reaction is (R)-pantothenate + ATP = (R)-4'-phosphopantothenate + ADP + H(+). It participates in cofactor biosynthesis; coenzyme A biosynthesis; CoA from (R)-pantothenate: step 1/5. In Psychromonas ingrahamii (strain DSM 17664 / CCUG 51855 / 37), this protein is Pantothenate kinase.